A 454-amino-acid polypeptide reads, in one-letter code: Toluate 1,2-dioxygenase subunit alpha (454 aa).

In terms of domain architecture, Rieske spans 51–148 (IYLAHESQIP…SFDCDGSHDL (98 aa)). Cys-92, His-94, Cys-112, and His-115 together coordinate [2Fe-2S] cluster. Fe cation is bound by residues His-221 and His-226.

This sequence belongs to the bacterial ring-hydroxylating dioxygenase alpha subunit family. This dioxygenase system consists of three proteins: the two subunits of the hydroxylase component (XylX and XylY), and an electron transfer component (XylZ). [2Fe-2S] cluster serves as cofactor. It depends on Fe cation as a cofactor.

Its pathway is xenobiotic degradation; toluene degradation. The chain is Toluate 1,2-dioxygenase subunit alpha (xylX) from Pseudomonas putida (Arthrobacter siderocapsulatus).